We begin with the raw amino-acid sequence, 365 residues long: Ribosome biogenesis regulatory protein homolog (365 aa).

M1 bears the N-acetylmethionine mark. S5 is modified (phosphoserine). Glycyl lysine isopeptide (Lys-Gly) (interchain with G-Cter in SUMO2) cross-links involve residues K154 and K226. The segment at 233-253 (GRFQERLPKEKVPRGSGKKRK) is disordered. Positions 235-245 (FQERLPKEKVP) are enriched in basic and acidic residues. Residue K266 forms a Glycyl lysine isopeptide (Lys-Gly) (interchain with G-Cter in SUMO2) linkage. R273 is subject to Citrulline. The segment at 280-365 (PQLDVTRATN…GQRPGGKRRK (86 aa)) is disordered. The span at 302–325 (KRRKMSQKGKRKGGRQGPGGKRKG) shows a compositional bias: basic residues. The span at 337–350 (GLGGKMNSGPPGLG) shows a compositional bias: gly residues. The span at 351–365 (GKRKGGQRPGGKRRK) shows a compositional bias: basic residues.

This sequence belongs to the RRS1 family. As to quaternary structure, component of a hexameric 5S RNP precursor complex, composed of 5S RNA, RRS1, RPF2/BXDC1, RPL5, RPL11 and HEATR3; this complex acts as a precursor for ribosome assembly. In terms of processing, citrullinated by PADI4.

The protein localises to the nucleus. Its subcellular location is the nucleolus. Involved in ribosomal large subunit assembly. May regulate the localization of the 5S RNP/5S ribonucleoprotein particle to the nucleolus. The sequence is that of Ribosome biogenesis regulatory protein homolog (RRS1) from Homo sapiens (Human).